The chain runs to 545 residues: Chaperonin GroEL (545 aa).

Residues 29 to 32, Lys50, 86 to 90, Gly414, 477 to 479, and Asp493 each bind ATP; these read TMGP, DGTTT, and DAA.

It belongs to the chaperonin (HSP60) family. Forms a cylinder of 14 subunits composed of two heptameric rings stacked back-to-back. Interacts with the co-chaperonin GroES.

Its subcellular location is the cytoplasm. The enzyme catalyses ATP + H2O + a folded polypeptide = ADP + phosphate + an unfolded polypeptide.. Its function is as follows. Together with its co-chaperonin GroES, plays an essential role in assisting protein folding. The GroEL-GroES system forms a nano-cage that allows encapsulation of the non-native substrate proteins and provides a physical environment optimized to promote and accelerate protein folding. This is Chaperonin GroEL from Campylobacter lari (strain RM2100 / D67 / ATCC BAA-1060).